Reading from the N-terminus, the 165-residue chain is uncharacterized protein (165 aa).

Residues 1–38 (MFTVKEKNRQELEEELNDLEFQIYRMQENMKDLSKDAK) are a coiled coil.

This is an uncharacterized protein from Bacillus subtilis (strain 168).